The chain runs to 210 residues: Cuticle collagen 2C (210 aa).

The disordered stretch occupies residues 11 to 210 (CTGGQAGPPG…GVFFEDGTRR (200 aa)). Pro residues-rich tracts occupy residues 40-76 (PGRP…PGEP) and 88-103 (DAPP…PGPP). Residues 105–122 (KAGAPGAAGQPGANAPSE) show a composition bias toward low complexity. Pro residues predominate over residues 123–144 (PLVPGPPGPPGPTGPEGPPGPN). The span at 167-179 (HPGAPGNAGHPGQ) shows a compositional bias: low complexity.

The protein belongs to the cuticular collagen family.

Nematode cuticles are composed largely of collagen-like proteins. The cuticle functions both as an exoskeleton and as a barrier to protect the worm from its environment. The protein is Cuticle collagen 2C (2C) of Haemonchus contortus (Barber pole worm).